The chain runs to 216 residues: Uracil phosphoribosyltransferase (216 aa).

GTP is bound by residues Arg32, Arg41, 75–78 (MGKI), and Lys77. At Ser82 the chain carries Phosphoserine. Arg85 contributes to the 5-phospho-alpha-D-ribose 1-diphosphate binding site. A GTP-binding site is contributed by Arg102. Residue Arg110 coordinates 5-phospho-alpha-D-ribose 1-diphosphate. Arg131 lines the GTP pocket. 5-phospho-alpha-D-ribose 1-diphosphate contacts are provided by residues Asp137 and 137-145 (DPMLATGGS). Position 201 (Tyr201) interacts with D-ribose 5-phosphate. Uracil-binding positions include Leu202 and 207–209 (GDF). Residue Asp208 participates in 5-phospho-alpha-D-ribose 1-diphosphate binding.

It belongs to the UPRTase family. It depends on Mg(2+) as a cofactor.

The enzyme catalyses UMP + diphosphate = 5-phospho-alpha-D-ribose 1-diphosphate + uracil. Its pathway is pyrimidine metabolism; UMP biosynthesis via salvage pathway; UMP from uracil: step 1/1. With respect to regulation, allosterically activated by GTP. Catalyzes the conversion of uracil and 5-phospho-alpha-D-ribose 1-diphosphate (PRPP) to UMP and diphosphate in the pyrimidine salvage pathway. The sequence is that of Uracil phosphoribosyltransferase (FUR1) from Saccharomyces cerevisiae (strain ATCC 204508 / S288c) (Baker's yeast).